Here is a 204-residue protein sequence, read N- to C-terminus: High frequency lysogenization protein HflD homolog (204 aa).

The protein belongs to the HflD family.

It localises to the cytoplasm. Its subcellular location is the cell inner membrane. This chain is High frequency lysogenization protein HflD homolog, found in Shewanella sediminis (strain HAW-EB3).